A 662-amino-acid polypeptide reads, in one-letter code: Polyunsaturated fatty acid (12S)/(13S)-lipoxygenase, epidermal-type (662 aa).

One can recognise a PLAT domain in the interval 2–114 (GKYKILVVTG…TIYLPEGTAL (113 aa)). The Lipoxygenase domain occupies 114 to 662 (LKVNDDTKNL…PSMVENSVTI (549 aa)). Residues His360, His365, His540, His544, and Ile662 each coordinate Fe cation.

The protein belongs to the lipoxygenase family. Fe cation is required as a cofactor.

It is found in the cytoplasm. It carries out the reaction (5Z,8Z,11Z,14Z)-eicosatetraenoate + O2 = (12S)-hydroperoxy-(5Z,8Z,10E,14Z)-eicosatetraenoate. It catalyses the reaction 1-O-methyl-(9Z,12Z)-octadecadienoate + O2 = 1-O-methyl-(13S)-hydroperoxy-(9Z,11E)-octadecadienoate. The catalysed reaction is (8Z,11Z,14Z)-eicosatrienoate + O2 = (12S)-hydroperoxy-(8Z,10E,14Z)-eicosatrienoate. The enzyme catalyses (5Z,8Z,11Z)-eicosatrienoate + O2 = (12S)-hydroperoxy-(5Z,8Z,10E)-eicosatrienoate. It carries out the reaction 1-O-methyl-(5Z,8Z,11Z,14Z)-eicosatetraenoate + O2 = 1-O-methyl-(12S)-hydroperoxy-(5Z,8Z,10E,14Z)-eicosatetraenoate. It catalyses the reaction (9Z,12Z)-octadecadienoate + O2 = (13S)-hydroperoxy-(9Z,11E)-octadecadienoate. The catalysed reaction is (4Z,7Z,10Z,13Z,16Z,19Z)-docosahexaenoate + O2 = (14S)-hydroperoxy-(4Z,7Z,10Z,12E,16Z,19Z)-docosahexaenoate. The protein operates within lipid metabolism; hydroperoxy eicosatetraenoic acid biosynthesis. Its activity is regulated as follows. Arachidonate 12-lipoxygenase activity is decreased when the pH decreases from 7.4 to 6.0. In terms of biological role, catalyzes the regio and stereo-specific incorporation of a single molecule of dioxygen into free and esterified polyunsaturated fatty acids generating lipid hydroperoxides that can be further reduced to the corresponding hydroxy species. Shows increasing catalytic activity within the series arachidonic acid &lt; 5,8,11-eicosatrienoic acid &lt; linoleic acid &lt; 8,11,14-eicosatrienoic acid. This chain is Polyunsaturated fatty acid (12S)/(13S)-lipoxygenase, epidermal-type, found in Rattus norvegicus (Rat).